The chain runs to 246 residues: MLIKQLSSSYNEYNNNYAASFLIGPLPEGIAQSLGFNIRSVLLKEFPYFAVKNIRFNPENNNYKTHIGTKESIETIINTILGIDFNYSFDFYKAMGLYKSKPKALFQENLSKAKFLCSAKQVGEGILYAKDLMLPVGIKCTTPYKIIAHVTKQNFLGFTFELGFLFGLNNNIKFENKLYSIKTYPIQNINIEIINSKKSFNLNSESIILSFTTKSSLQPIDVIKILSYLLLNKHLILIKAFQQFLD.

It belongs to the RNA polymerase alpha chain family. As to quaternary structure, in plastids the minimal PEP RNA polymerase catalytic core is composed of four subunits: alpha, beta, beta', and beta''. When a (nuclear-encoded) sigma factor is associated with the core the holoenzyme is formed, which can initiate transcription (Potential).

It localises to the plastid. The catalysed reaction is RNA(n) + a ribonucleoside 5'-triphosphate = RNA(n+1) + diphosphate. Its function is as follows. DNA-dependent RNA polymerase catalyzes the transcription of DNA into RNA using the four ribonucleoside triphosphates as substrates. This Helicosporidium sp. subsp. Simulium jonesii (Green alga) protein is DNA-directed RNA polymerase subunit alpha (rpoA).